The following is a 599-amino-acid chain: Putative sensor histidine kinase NtrY-like (599 aa).

4 helical membrane-spanning segments follow: residues 17–37 (ILIL…FYVI), 44–64 (FSTI…LGIL), 85–105 (IVIA…VFSV), and 285–305 (IMFI…GVLF). The 55-residue stretch at 307-361 (AQIVKPIKKLVTATDKVKDGDLTVQVPENEVDKDEIGTLYVAFNRMIKQLSRQQR) folds into the HAMP domain. A Histidine kinase domain is found at 378-589 (KVAHEIKNPL…IIDIKFDLKE (212 aa)). Residue H381 is modified to Phosphohistidine; by autocatalysis.

It localises to the cell membrane. It catalyses the reaction ATP + protein L-histidine = ADP + protein N-phospho-L-histidine.. Member of the two-component regulatory system RT0603/RT0550. The polypeptide is Putative sensor histidine kinase NtrY-like (Rickettsia typhi (strain ATCC VR-144 / Wilmington)).